The primary structure comprises 267 residues: MEMO1 family protein MM_1761 (267 aa).

It belongs to the MEMO1 family.

The polypeptide is MEMO1 family protein MM_1761 (Methanosarcina mazei (strain ATCC BAA-159 / DSM 3647 / Goe1 / Go1 / JCM 11833 / OCM 88) (Methanosarcina frisia)).